Here is a 276-residue protein sequence, read N- to C-terminus: Large ribosomal subunit protein uL2 (276 aa).

Disordered stretches follow at residues 1 to 50 (MPIK…GRVT) and 206 to 276 (GKAG…SKKR). The segment covering 7 to 19 (RPTTPTRRFQTVV) has biased composition (polar residues). The span at 20-38 (SREDITKQTPEKSLVESKK) shows a compositional bias: basic and acidic residues.

The protein belongs to the universal ribosomal protein uL2 family. In terms of assembly, part of the 50S ribosomal subunit. Forms a bridge to the 30S subunit in the 70S ribosome.

Its function is as follows. One of the primary rRNA binding proteins. Required for association of the 30S and 50S subunits to form the 70S ribosome, for tRNA binding and peptide bond formation. It has been suggested to have peptidyltransferase activity; this is somewhat controversial. Makes several contacts with the 16S rRNA in the 70S ribosome. This chain is Large ribosomal subunit protein uL2, found in Solibacter usitatus (strain Ellin6076).